Reading from the N-terminus, the 292-residue chain is Putative sugar lactone lactonase YvrE (292 aa).

3 residues coordinate a divalent metal cation: E15, N146, and D196.

This sequence belongs to the SMP-30/CGR1 family. Requires a divalent metal cation as cofactor.

It localises to the cytoplasm. The polypeptide is Putative sugar lactone lactonase YvrE (yvrE) (Bacillus subtilis (strain 168)).